The primary structure comprises 542 residues: MDLGAITKYSALHAKPNGLILQYGTAGFRTKAEHLDHVMFRMGLLAVLRSKQTKSTIGVMVTASHNPEEDNGVKLVDPLGEMLAPSWEEHATCLANAEEQDMQRVLIDISEKEAVNLQQDAFVVIGRDTRPSSEKLSQSVIDGVTVLGGQFHDYGLLTTPQLHYMVYCRNTGGRYGKATIEGYYQKLSKAFVELTKQASCSGDEYRSLKVDCANGIGALKLREMEHYFSQGLSVQLFNDGSKGKLNHLCGADFVKSHQKPPQGMEIKSNERCCSFDGDADRIVYYYHDADGHFHLIDGDKIATLISSFLKELLVEIGESLNIGVVQTAYANGSSTRYLEEVMKVPVYCTKTGVKHLHHKAQEFDIGVYFEANGHGTALFSTAVEMKIKQSAEQLEDKKRKAAKMLENIIDLFNQAAGDAISDMLVIEAILALKGLTVQQWDALYTDLPNRQLKVQVADRRVISTTDAERQAVTPPGLQEAINDLVKKYKLSRAFVRPSGTEDVVRVYAEADSQESADHLAHEVSLAVFQLAGGIGERPQPGF.

Met-1 carries the N-acetylmethionine modification. The residue at position 62 (Thr-62) is a Phosphothreonine. Catalysis depends on Ser-64, which acts as the Phosphoserine intermediate. Residues Ser-64, Asp-276, Asp-278, and Asp-280 each contribute to the Mg(2+) site. The residue at position 64 (Ser-64) is a Phosphoserine. Substrate contacts are provided by residues 370-372 (EAN), 496-500 (RPSGT), and Arg-505.

This sequence belongs to the phosphohexose mutase family. The cofactor is Mg(2+). In terms of tissue distribution, found in many tissues except lung. Relatively high expression in pancreas, heart, liver, and placenta, and relatively low expression in brain, skeletal muscle and kidney.

The catalysed reaction is N-acetyl-alpha-D-glucosamine 1-phosphate = N-acetyl-D-glucosamine 6-phosphate. The protein operates within nucleotide-sugar biosynthesis; UDP-N-acetyl-alpha-D-glucosamine biosynthesis; N-acetyl-alpha-D-glucosamine 1-phosphate from alpha-D-glucosamine 6-phosphate (route I): step 2/2. In terms of biological role, catalyzes the conversion of GlcNAc-6-P into GlcNAc-1-P during the synthesis of uridine diphosphate/UDP-GlcNAc, a sugar nucleotide critical to multiple glycosylation pathways including protein N- and O-glycosylation. This is Phosphoacetylglucosamine mutase from Homo sapiens (Human).